The chain runs to 411 residues: 4-coumarate--CoA ligase (411 aa).

The protein belongs to the ATP-dependent AMP-binding enzyme family.

It catalyses the reaction (E)-4-coumarate + ATP + CoA = (E)-4-coumaroyl-CoA + AMP + diphosphate. In terms of biological role, converts p-coumaric acid into p-coumaryl CoA. This is necessary for the activation of the photoactive yellow protein (PYP) chromophore. The polypeptide is 4-coumarate--CoA ligase (pcl) (Cereibacter sphaeroides (strain ATCC 17023 / DSM 158 / JCM 6121 / CCUG 31486 / LMG 2827 / NBRC 12203 / NCIMB 8253 / ATH 2.4.1.) (Rhodobacter sphaeroides)).